Here is a 921-residue protein sequence, read N- to C-terminus: AdoMet-dependent rRNA methyltransferase SPB1 (921 aa).

Gly58, Trp60, Asp78, Asp94, and Asp119 together coordinate S-adenosyl-L-methionine. Lys159 acts as the Proton acceptor in catalysis. The stretch at 367–414 (VEEMDEDDQIDDELARLNEEAARKARKERRRKNELRQKKILKMQLQMT) forms a coiled coil. Disordered stretches follow at residues 448–476 (ALIQQADVSDDESETIVSSQHTDDDDPET), 491–604 (EFKQ…KRSL), 635–713 (ELDE…GKQK), 814–835 (LEKAQKKAETINENEDISEKEK), and 866–921 (RGLK…GPRN). Residues 491–522 (EFKQKQSERDAKFRAKQARLQDAKNDSWHGIK) show a composition bias toward basic and acidic residues. Composition is skewed to acidic residues over residues 523–542 (DDEENDEDDDEANLSDESEG), 555–568 (ETFDTDDEEDEEDE), 635–684 (ELDE…DDFE), and 697–708 (DEEWDLNGEDEE). Positions 796 to 835 (IKKVAEAKARKKMRTLRRLEKAQKKAETINENEDISEKEK) form a coiled coil. Basic and acidic residues predominate over residues 814-823 (LEKAQKKAET). The span at 868–879 (LKGRPKGTKGRY) shows a compositional bias: basic residues. Residues 880–892 (KMVDPRMKKELRA) are compositionally biased toward basic and acidic residues.

This sequence belongs to the class I-like SAM-binding methyltransferase superfamily. RNA methyltransferase RlmE family. SPB1 subfamily. In terms of assembly, component of the nucleolar and nucleoplasmic pre-60S ribosomal particle.

Its subcellular location is the nucleus. It is found in the nucleolus. The catalysed reaction is a ribonucleotide in rRNA + S-adenosyl-L-methionine = a 2'-O-methylribonucleotide in rRNA + S-adenosyl-L-homocysteine + H(+). In terms of biological role, required for proper assembly of pre-ribosomal particles during the biogenesis of the 60S ribosomal subunit. This is AdoMet-dependent rRNA methyltransferase SPB1 from Mycosarcoma maydis (Corn smut fungus).